A 218-amino-acid chain; its full sequence is Large ribosomal subunit protein uL3 (218 aa).

It belongs to the universal ribosomal protein uL3 family. As to quaternary structure, part of the 50S ribosomal subunit. Forms a cluster with proteins L14 and L19.

Its function is as follows. One of the primary rRNA binding proteins, it binds directly near the 3'-end of the 23S rRNA, where it nucleates assembly of the 50S subunit. The chain is Large ribosomal subunit protein uL3 from Corynebacterium urealyticum (strain ATCC 43042 / DSM 7109).